The sequence spans 382 residues: (R,R)-butanediol dehydrogenase (382 aa).

C39 serves as a coordination point for Zn(2+). The residue at position 63 (S63) is a Phosphoserine. H73, C103, C120, C123, C131, and E173 together coordinate Zn(2+).

It belongs to the zinc-containing alcohol dehydrogenase family. As to quaternary structure, homodimer. Zn(2+) serves as cofactor.

Its subcellular location is the cytoplasm. It carries out the reaction (R,R)-butane-2,3-diol + NAD(+) = (R)-acetoin + NADH + H(+). In terms of biological role, NAD-dependent (R,R)-butanediol dehydrogenase which catalyzes oxidation of (R,R)-butane-2,3-diol to (3R)-acetoin, of meso-butanediol to (3S)-acetoin, and reduction of acetoin. Allows the use of 2,3-butanediol as an aerobic carbon source. This is (R,R)-butanediol dehydrogenase (BDH1) from Saccharomyces cerevisiae (strain ATCC 204508 / S288c) (Baker's yeast).